Here is a 174-residue protein sequence, read N- to C-terminus: Peptide methionine sulfoxide reductase MsrA (174 aa).

Cysteine 11 is an active-site residue.

The protein belongs to the MsrA Met sulfoxide reductase family.

The catalysed reaction is L-methionyl-[protein] + [thioredoxin]-disulfide + H2O = L-methionyl-(S)-S-oxide-[protein] + [thioredoxin]-dithiol. The enzyme catalyses [thioredoxin]-disulfide + L-methionine + H2O = L-methionine (S)-S-oxide + [thioredoxin]-dithiol. Functionally, has an important function as a repair enzyme for proteins that have been inactivated by oxidation. Catalyzes the reversible oxidation-reduction of methionine sulfoxide in proteins to methionine. In Haloquadratum walsbyi (strain DSM 16790 / HBSQ001), this protein is Peptide methionine sulfoxide reductase MsrA.